Reading from the N-terminus, the 371-residue chain is Protein NDRG2 (371 aa).

Positions 1-21 (MAELQEVQITEEKPLLPGQTP) are disordered. N-acetylalanine is present on Ala2. Residue Thr20 is modified to Phosphothreonine. A phosphoserine mark is found at Ser326 and Ser328. Position 330 is a phosphothreonine (Thr330). A Phosphoserine modification is found at Ser332. A Phosphothreonine modification is found at Thr334. The tract at residues 334 to 371 (TSAASVDGNRSRSRTLSQSSESGTLSSGPPGHTMEVSC) is disordered. Ser335, Ser338, and Ser344 each carry phosphoserine. Positions 347–361 (RTLSQSSESGTLSSG) are enriched in low complexity. Phosphothreonine is present on Thr348. Phosphoserine occurs at positions 350, 352, 353, and 355. Phosphothreonine is present on Thr357. Position 370 is a phosphoserine (Ser370).

The protein belongs to the NDRG family. As to quaternary structure, interacts with CTNNB1.

The protein localises to the cytoplasm. It is found in the perinuclear region. It localises to the cell projection. The protein resides in the growth cone. In terms of biological role, contributes to the regulation of the Wnt signaling pathway. Down-regulates CTNNB1-mediated transcriptional activation of target genes, such as CCND1, and may thereby act as tumor suppressor. May be involved in dendritic cell and neuron differentiation. The protein is Protein NDRG2 (NDRG2) of Pongo abelii (Sumatran orangutan).